We begin with the raw amino-acid sequence, 105 residues long: Small ribosomal subunit protein uS10c (105 aa).

Belongs to the universal ribosomal protein uS10 family. As to quaternary structure, part of the 30S ribosomal subunit.

Its subcellular location is the plastid. The protein resides in the chloroplast. Functionally, involved in the binding of tRNA to the ribosomes. The protein is Small ribosomal subunit protein uS10c of Porphyra purpurea (Red seaweed).